The primary structure comprises 40 residues: Adenylate kinase (40 aa).

Residue 10–15 (GAGKGT) participates in ATP binding. The tract at residues 30 to 40 (STGDMFIKAIK) is NMP. Threonine 31 contributes to the AMP binding site.

Belongs to the adenylate kinase family. Monomer.

The protein resides in the cytoplasm. It catalyses the reaction AMP + ATP = 2 ADP. It functions in the pathway purine metabolism; AMP biosynthesis via salvage pathway; AMP from ADP: step 1/1. In terms of biological role, catalyzes the reversible transfer of the terminal phosphate group between ATP and AMP. Plays an important role in cellular energy homeostasis and in adenine nucleotide metabolism. The chain is Adenylate kinase (adk) from Staphylococcus carnosus.